Here is a 1378-residue protein sequence, read N- to C-terminus: DNA-directed RNA polymerase subunit beta (1378 aa).

Belongs to the RNA polymerase beta chain family. As to quaternary structure, the RNAP catalytic core consists of 2 alpha, 1 beta, 1 beta' and 1 omega subunit. When a sigma factor is associated with the core the holoenzyme is formed, which can initiate transcription.

It catalyses the reaction RNA(n) + a ribonucleoside 5'-triphosphate = RNA(n+1) + diphosphate. DNA-dependent RNA polymerase catalyzes the transcription of DNA into RNA using the four ribonucleoside triphosphates as substrates. The chain is DNA-directed RNA polymerase subunit beta from Campylobacter jejuni (strain RM1221).